The following is a 430-amino-acid chain: Glutamate-1-semialdehyde 2,1-aminomutase (430 aa).

Lysine 267 is modified (N6-(pyridoxal phosphate)lysine).

The protein belongs to the class-III pyridoxal-phosphate-dependent aminotransferase family. HemL subfamily. In terms of assembly, homodimer. Requires pyridoxal 5'-phosphate as cofactor.

The protein resides in the cytoplasm. It carries out the reaction (S)-4-amino-5-oxopentanoate = 5-aminolevulinate. The protein operates within porphyrin-containing compound metabolism; protoporphyrin-IX biosynthesis; 5-aminolevulinate from L-glutamyl-tRNA(Glu): step 2/2. The chain is Glutamate-1-semialdehyde 2,1-aminomutase from Natranaerobius thermophilus (strain ATCC BAA-1301 / DSM 18059 / JW/NM-WN-LF).